Consider the following 460-residue polypeptide: Elongation factor 1-alpha (460 aa).

Gly-2 is subject to N,N,N-trimethylglycine. Lys-3 is modified (N6,N6-dimethyllysine; alternate). At Lys-3 the chain carries N6-methyllysine; alternate. The 236-residue stretch at 6–241 (KTHINLVVIG…DAIDPPTRPT (236 aa)) folds into the tr-type G domain. A G1 region spans residues 15-22 (GHVDSGKS). 15-22 (GHVDSGKS) provides a ligand contact to GTP. Position 31 is an N6-methyllysine (Lys-31). Residues 71–75 (GITID) form a G2 region. Lys-80 is subject to N6,N6,N6-trimethyllysine. The segment at 92-95 (DAPG) is G3. Residues 92 to 96 (DAPGH) and 154 to 157 (NKMD) each bind GTP. Residues 154-157 (NKMD) are G4. The tract at residues 193–195 (SGF) is G5. Lys-317 bears the N6,N6-dimethyllysine; alternate mark. At Lys-317 the chain carries N6-methyllysine; alternate. Lys-391 carries the N6-methyllysine modification.

It belongs to the TRAFAC class translation factor GTPase superfamily. Classic translation factor GTPase family. EF-Tu/EF-1A subfamily.

It localises to the cytoplasm. In terms of biological role, this protein promotes the GTP-dependent binding of aminoacyl-tRNA to the A-site of ribosomes during protein biosynthesis. This Coccidioides immitis (strain RS) (Valley fever fungus) protein is Elongation factor 1-alpha (TEF).